A 292-amino-acid polypeptide reads, in one-letter code: Bifunctional protein FolD (292 aa).

NADP(+) is bound by residues Gly-169–Gly-171, Thr-196, and Val-237.

This sequence belongs to the tetrahydrofolate dehydrogenase/cyclohydrolase family. As to quaternary structure, homodimer.

The enzyme catalyses (6R)-5,10-methylene-5,6,7,8-tetrahydrofolate + NADP(+) = (6R)-5,10-methenyltetrahydrofolate + NADPH. It carries out the reaction (6R)-5,10-methenyltetrahydrofolate + H2O = (6R)-10-formyltetrahydrofolate + H(+). Its pathway is one-carbon metabolism; tetrahydrofolate interconversion. Its function is as follows. Catalyzes the oxidation of 5,10-methylenetetrahydrofolate to 5,10-methenyltetrahydrofolate and then the hydrolysis of 5,10-methenyltetrahydrofolate to 10-formyltetrahydrofolate. This chain is Bifunctional protein FolD, found in Bifidobacterium longum (strain NCC 2705).